The following is an 88-amino-acid chain: Co-chaperonin GroES (88 aa).

It belongs to the GroES chaperonin family. As to quaternary structure, heptamer of 7 subunits arranged in a ring. Interacts with the chaperonin GroEL.

The protein resides in the cytoplasm. Together with the chaperonin GroEL, plays an essential role in assisting protein folding. The GroEL-GroES system forms a nano-cage that allows encapsulation of the non-native substrate proteins and provides a physical environment optimized to promote and accelerate protein folding. GroES binds to the apical surface of the GroEL ring, thereby capping the opening of the GroEL channel. The protein is Co-chaperonin GroES of Treponema pallidum (strain Nichols).